The primary structure comprises 380 residues: Beta sliding clamp (380 aa).

The protein belongs to the beta sliding clamp family. In terms of assembly, forms a ring-shaped head-to-tail homodimer around DNA which binds and tethers DNA polymerases and other proteins to the DNA. The DNA replisome complex has a single clamp-loading complex (3 tau and 1 each of delta, delta', psi and chi subunits) which binds 3 Pol III cores (1 core on the leading strand and 2 on the lagging strand) each with a beta sliding clamp dimer. Additional proteins in the replisome are other copies of gamma, psi and chi, Ssb, DNA helicase and RNA primase.

It localises to the cytoplasm. Confers DNA tethering and processivity to DNA polymerases and other proteins. Acts as a clamp, forming a ring around DNA (a reaction catalyzed by the clamp-loading complex) which diffuses in an ATP-independent manner freely and bidirectionally along dsDNA. Initially characterized for its ability to contact the catalytic subunit of DNA polymerase III (Pol III), a complex, multichain enzyme responsible for most of the replicative synthesis in bacteria; Pol III exhibits 3'-5' exonuclease proofreading activity. The beta chain is required for initiation of replication as well as for processivity of DNA replication. This Mycoplasma genitalium (strain ATCC 33530 / DSM 19775 / NCTC 10195 / G37) (Mycoplasmoides genitalium) protein is Beta sliding clamp (dnaN).